Here is a 293-residue protein sequence, read N- to C-terminus: Pantothenate synthetase (293 aa).

Met30 to His37 is a binding site for ATP. The active-site Proton donor is the His37. Gln61 lines the (R)-pantoate pocket. Gln61 contacts beta-alanine. Gly147–Asp150 lines the ATP pocket. Gln153 is a (R)-pantoate binding site. ATP-binding positions include Val176 and Cys184–Arg187.

Belongs to the pantothenate synthetase family. As to quaternary structure, homodimer.

It is found in the cytoplasm. The enzyme catalyses (R)-pantoate + beta-alanine + ATP = (R)-pantothenate + AMP + diphosphate + H(+). It participates in cofactor biosynthesis; (R)-pantothenate biosynthesis; (R)-pantothenate from (R)-pantoate and beta-alanine: step 1/1. In terms of biological role, catalyzes the condensation of pantoate with beta-alanine in an ATP-dependent reaction via a pantoyl-adenylate intermediate. The polypeptide is Pantothenate synthetase (Brucella melitensis biotype 2 (strain ATCC 23457)).